The chain runs to 86 residues: MATKKAGGSSRNGRDSAGRRLGVKKADGQYVIPGNIIVRQRGTKIHPGVNVGIGKDHTIFALTSGRVEFLTKRDHKIVNVTEIASA.

The segment at 1-22 (MATKKAGGSSRNGRDSAGRRLG) is disordered.

Belongs to the bacterial ribosomal protein bL27 family.

This Rickettsia bellii (strain RML369-C) protein is Large ribosomal subunit protein bL27.